The sequence spans 360 residues: NADP-dependent alcohol dehydrogenase 6 (360 aa).

Residue Cys-46 coordinates Zn(2+). Residues Gly-47 and His-51 each coordinate NADP(+). 5 residues coordinate Zn(2+): His-68, Cys-100, Cys-103, Cys-106, and Cys-114. Ser-131 is modified (phosphoserine). Cys-163 contacts Zn(2+). NADP(+) contacts are provided by Leu-188, Gly-190, Ile-191, Ser-210, Arg-211, Lys-215, Cys-250, Ser-252, Thr-255, Asp-256, Ile-275, Ile-277, Tyr-298, Ser-299, Leu-301, and Arg-348. Ser-359 is subject to Phosphoserine.

It belongs to the zinc-containing alcohol dehydrogenase family. Homodimer. Zn(2+) is required as a cofactor.

The protein resides in the cytoplasm. It localises to the nucleus. It carries out the reaction a primary alcohol + NADP(+) = an aldehyde + NADPH + H(+). The enzyme catalyses (E)-cinnamyl alcohol + NADP(+) = (E)-cinnamaldehyde + NADPH + H(+). It catalyses the reaction hexan-1-ol + NADP(+) = hexanal + NADPH + H(+). The catalysed reaction is 3-methylbutanol + NADP(+) = 3-methylbutanal + NADPH + H(+). It carries out the reaction S-nitroso-CoA + NADPH + H(+) = sulfinamide-CoA + NADP(+). Its function is as follows. NADP-dependent, medium-chain alcohol dehydrogenase with a broad substrate specificity. Aldehydes exhibited 50-12000 times higher catalytic efficiency than the corresponding alcohols, therefore the major function of the enzyme is as an aldehyde reductase. The enzyme is active towards aromatic and aliphatic (linear and branched-chain) aldehydes. The enzyme is very active towards aromatic aldehydes, such as cinnamaldehyde, benzaldehyde and substituted benzaldehydes, such as veratraldehyde and panisaldehyde. It exhibits low activity towards substituted cinnamaldehydes, such as coniferaldehyde and sinapaldehyde. The enzyme has no activity with ketones, such as acetone or cyclohexanone. For the reverse reaction, linear and branched-chain primary alcohols are substrates, whereas very low activity is found with secondary alcohols, such as butan-2-ol. The enzyme may be physiologically involved in several steps of the lignin degradation pathway, initiated by other microorganisms, in the synthesis of fusel alcohols, products derived from the aminoacidic metabolism, and in the homeostasis of NADP(H). Has the ability to reduce 5-hydroxymethyl furfural (HMF), a furan derivative which is formed during the hydrolysis of lignocellulosic materials, to 5-hydroxymethylfurfuryl alcohol, thereby alleviating the inhibition of the fermentation of lignocellulose hydrolysates by HMF during fuel ethanol production. Also acts as an inhibitor of protein S-nitrosylation by mediating degradation of S-nitroso-coenzyme A (S-nitroso-CoA), a cofactor required to S-nitrosylate proteins. The chain is NADP-dependent alcohol dehydrogenase 6 from Saccharomyces cerevisiae (strain ATCC 204508 / S288c) (Baker's yeast).